Reading from the N-terminus, the 187-residue chain is Orotate phosphoribosyltransferase (187 aa).

5-phospho-alpha-D-ribose 1-diphosphate contacts are provided by residues arginine 103, lysine 104, lysine 107, and 129–137; that span reads EDVTTSGGS. Threonine 133 and arginine 161 together coordinate orotate.

The protein belongs to the purine/pyrimidine phosphoribosyltransferase family. PyrE subfamily. As to quaternary structure, homodimer. It depends on Mg(2+) as a cofactor.

It catalyses the reaction orotidine 5'-phosphate + diphosphate = orotate + 5-phospho-alpha-D-ribose 1-diphosphate. The protein operates within pyrimidine metabolism; UMP biosynthesis via de novo pathway; UMP from orotate: step 1/2. Its function is as follows. Catalyzes the transfer of a ribosyl phosphate group from 5-phosphoribose 1-diphosphate to orotate, leading to the formation of orotidine monophosphate (OMP). The polypeptide is Orotate phosphoribosyltransferase (Methanosarcina mazei (strain ATCC BAA-159 / DSM 3647 / Goe1 / Go1 / JCM 11833 / OCM 88) (Methanosarcina frisia)).